Reading from the N-terminus, the 390-residue chain is Tumor susceptibility gene 101 protein (390 aa).

The residue at position 2 (Ala2) is an N-acetylalanine. A UEV domain is found at 2–145; that stretch reads AVSESQLKKM…GDEPPVFSRP (144 aa). Residues 158 to 162 form an interaction with CEP55 region; that stretch reads PPNTS. The segment covering 198–214 has biased composition (polar residues); the sequence is ATTSSQYPSQPPVTTVG. The interval 198–220 is disordered; sequence ATTSSQYPSQPPVTTVGPSRDGT. The residue at position 220 (Thr220) is a Phosphothreonine. Residues 235-316 are a coiled coil; that stretch reads SDKLRWRMKE…NQSENNDIDE (82 aa). Positions 320–323 match the PTAP motif motif; the sequence is PTAP. One can recognise an SB domain in the interval 322–390; it reads APLYKQILNL…RKTAGLSDLY (69 aa).

This sequence belongs to the ubiquitin-conjugating enzyme family. UEV subfamily. Component of the ESCRT-I complex (endosomal sorting complex required for transport I) which consists of TSG101, VPS28, a VPS37 protein (VPS37A to -D) and MVB12A or MVB12B in a 1:1:1:1 stoichiometry. Interacts with VPS37A, VPS37B and VPS37C. Interacts with DMAP1. Interacts with ubiquitin. Interacts with stathmin, GMCL and AATF. Component of an ESCRT-I complex (endosomal sorting complex required for transport I) which consists of TSG101, VPS28, VPS37A and UBAP1 in a 1:1:1:1 stoichiometry. Interacts with HGS; the interaction mediates the association with the ESCRT-0 complex. Interacts with GGA1 and GGA3. Interacts (via UEV domain) with PDCD6IP/AIP1. Interacts with VPS28, SNF8 and VPS36. Self-associates. Interacts with MVB12A; the association appears to be mediated by the TSG101-VPS37 binary subcomplex. Interacts with VPS37D. Interacts with LRSAM1. Interacts with CEP55; the interaction is required for cytokinesis but not for viral budding. Interacts with PDCD6. Interacts with LITAF. Interacts with MGRN1. Interacts with ARRDC1; recruits TSG101 to the plasma membrane. As to quaternary structure, (Microbial infection) Interacts with HIV-1 p6. In terms of assembly, (Microbial infection) Interacts with human spumavirus Gag. (Microbial infection) Interacts with HTLV-1 Gag. As to quaternary structure, (Microbial infection) Interacts with Ebola virus VP40. In terms of assembly, (Microbial infection) Interacts with EIAV p9; the interaction has been shown in vitro. (Microbial infection) Interacts with Lassa virus protein Z. As to quaternary structure, (Microbial infection) Interacts with hepatitis E virus protein ORF3. Post-translationally, monoubiquitinated at multiple sites by LRSAM1 and by MGRN1. Ubiquitination inactivates it, possibly by regulating its shuttling between an active membrane-bound protein and an inactive soluble form. Ubiquitination by MGRN1 requires the presence of UBE2D1. In terms of tissue distribution, heart, brain, placenta, lung, liver, skeletal, kidney and pancreas.

The protein resides in the cytoplasm. The protein localises to the early endosome membrane. It localises to the late endosome membrane. Its subcellular location is the cytoskeleton. It is found in the microtubule organizing center. The protein resides in the centrosome. The protein localises to the midbody. It localises to the midbody ring. Its subcellular location is the nucleus. Functionally, component of the ESCRT-I complex, a regulator of vesicular trafficking process. Binds to ubiquitinated cargo proteins and is required for the sorting of endocytic ubiquitinated cargos into multivesicular bodies (MVBs). Mediates the association between the ESCRT-0 and ESCRT-I complex. Required for completion of cytokinesis; the function requires CEP55. May be involved in cell growth and differentiation. Acts as a negative growth regulator. Involved in the budding of many viruses through an interaction with viral proteins that contain a late-budding motif P-[ST]-A-P. This interaction is essential for viral particle budding of numerous retroviruses. Required for the exosomal release of SDCBP, CD63 and syndecan. It may also play a role in the extracellular release of microvesicles that differ from the exosomes. In Homo sapiens (Human), this protein is Tumor susceptibility gene 101 protein (TSG101).